We begin with the raw amino-acid sequence, 395 residues long: Pyridinium-3,5-bisthiocarboxylic acid mononucleotide nickel insertion protein (395 aa).

The protein belongs to the LarC family.

It carries out the reaction Ni(II)-pyridinium-3,5-bisthiocarboxylate mononucleotide = pyridinium-3,5-bisthiocarboxylate mononucleotide + Ni(2+). Involved in the biosynthesis of a nickel-pincer cofactor ((SCS)Ni(II) pincer complex). Binds Ni(2+), and functions in nickel delivery to pyridinium-3,5-bisthiocarboxylic acid mononucleotide (P2TMN), to form the mature cofactor. Is thus probably required for the activation of nickel-pincer cofactor-dependent enzymes. This is Pyridinium-3,5-bisthiocarboxylic acid mononucleotide nickel insertion protein from Staphylococcus epidermidis (strain ATCC 12228 / FDA PCI 1200).